The sequence spans 120 residues: Ribonuclease P protein component 4 (120 aa).

Zn(2+)-binding residues include cysteine 68, cysteine 71, cysteine 97, and cysteine 100.

Belongs to the eukaryotic/archaeal RNase P protein component 4 family. Consists of a catalytic RNA component and at least 5 protein subunits. Forms a heterodimeric subcomplex with Rnp1. Reconstituted enzyme missing individual protein subunits is suboptimally active, showing each subunit contributes to optimization of activity. The cofactor is Zn(2+).

The protein resides in the cytoplasm. It carries out the reaction Endonucleolytic cleavage of RNA, removing 5'-extranucleotides from tRNA precursor.. In terms of biological role, part of ribonuclease P, a protein complex that generates mature tRNA molecules by cleaving their 5'-ends. Binds RNase P RNA. This chain is Ribonuclease P protein component 4, found in Pyrococcus horikoshii (strain ATCC 700860 / DSM 12428 / JCM 9974 / NBRC 100139 / OT-3).